The primary structure comprises 212 residues: LexA repressor (212 aa).

A DNA-binding region (H-T-H motif) is located at residues 29–49 (VREIGEAVGLSSSSTIHGHIE). Catalysis depends on for autocatalytic cleavage activity residues serine 133 and lysine 171.

Belongs to the peptidase S24 family. Homodimer.

It catalyses the reaction Hydrolysis of Ala-|-Gly bond in repressor LexA.. Its function is as follows. Represses a number of genes involved in the response to DNA damage (SOS response), including recA and lexA. In the presence of single-stranded DNA, RecA interacts with LexA causing an autocatalytic cleavage which disrupts the DNA-binding part of LexA, leading to derepression of the SOS regulon and eventually DNA repair. In Leuconostoc mesenteroides subsp. mesenteroides (strain ATCC 8293 / DSM 20343 / BCRC 11652 / CCM 1803 / JCM 6124 / NCDO 523 / NBRC 100496 / NCIMB 8023 / NCTC 12954 / NRRL B-1118 / 37Y), this protein is LexA repressor.